The following is a 239-amino-acid chain: Ribulose-1,5-bisphosphate 5-phosphatase (239 aa).

D8 (nucleophile) is an active-site residue. Positions 8, 10, and 184 each coordinate Mg(2+). The active-site Proton donor is the D10. The segment at 205 to 239 is disordered; the sequence is PSEESDATESADRAATERQADHSIDTLGELTDLVS. Residues 214-228 are compositionally biased toward basic and acidic residues; that stretch reads SADRAATERQADHSI.

This sequence belongs to the HAD-like hydrolase superfamily. Requires Mg(2+) as cofactor. It depends on Mn(2+) as a cofactor. The cofactor is Co(2+). Ni(2+) serves as cofactor.

It carries out the reaction D-ribulose 1,5-bisphosphate + H2O = D-ribulose 1-phosphate + phosphate. With respect to regulation, requires both monovalent and divalent ions for optimal activity. Optimal KCl concentration is higher than 2.5 M. Its function is as follows. Phosphatase involved in the non-carboxylating pentose bisphosphate pathway, a nucleoside degradation pathway present in some halophilic archaea. Catalyzes the dephosphorylation of ribulose 1,5-bisphosphate (RuBP) to ribulose 1-phosphate (Ru1P). Shows a strict substrate specificity toward RuBP. The polypeptide is Ribulose-1,5-bisphosphate 5-phosphatase (Halopiger xanaduensis (strain DSM 18323 / JCM 14033 / SH-6)).